Consider the following 247-residue polypeptide: Coproheme decarboxylase (247 aa).

Fe-coproporphyrin III is bound by residues arginine 129, 143–147, histidine 170, glutamine 183, and serine 221; that span reads YPMDK. The active site involves tyrosine 143.

Belongs to the ChdC family. Type 1 subfamily. Fe-coproporphyrin III is required as a cofactor.

It carries out the reaction Fe-coproporphyrin III + 2 H2O2 + 2 H(+) = heme b + 2 CO2 + 4 H2O. The catalysed reaction is Fe-coproporphyrin III + H2O2 + H(+) = harderoheme III + CO2 + 2 H2O. The enzyme catalyses harderoheme III + H2O2 + H(+) = heme b + CO2 + 2 H2O. It functions in the pathway porphyrin-containing compound metabolism; protoheme biosynthesis. Its function is as follows. Involved in coproporphyrin-dependent heme b biosynthesis. Catalyzes the decarboxylation of Fe-coproporphyrin III (coproheme) to heme b (protoheme IX), the last step of the pathway. The reaction occurs in a stepwise manner with a three-propionate intermediate. This is Coproheme decarboxylase from Bacillus cereus (strain ATCC 10987 / NRS 248).